A 249-amino-acid polypeptide reads, in one-letter code: Pyridoxamine 5'-phosphate oxidase family protein ustO (249 aa).

Residue 21 to 24 coordinates substrate; it reads LFFV. FMN-binding positions include 76-81, 91-92, R105, and 163-164; these read ATVMFC and RL. A substrate-binding site is contributed by 215-217; the sequence is ASY. The helical transmembrane segment at 227-247 threads the bilayer; sequence TGMALMFLVMVVAQWVGYVLY.

The protein belongs to the pyridoxamine 5'-phosphate oxidase family. Requires FMN as cofactor.

The protein resides in the membrane. The protein operates within mycotoxin biosynthesis. In terms of biological role, pyridoxamine 5'-phosphate oxidase family protein; part of the gene cluster that mediates the biosynthesis of the secondary metabolite ustiloxin B, an antimitotic tetrapeptide. First, ustA is processed by the subtilisin-like endoprotease Kex2 that is outside the ustiloxin B gene cluster, at the C-terminal side of Arg-Lys, after transfer to Golgi apparatus through the endoplasmic reticulum (ER). Cleavage by KEX2 generates 16 peptides YAIG-I to YAIG-XVI. To process the precursor peptide further, at least two peptidases are necessary to cleave the N-terminal and C-terminal sides of the Tyr-Ala-Ile-Gly core peptide which serves as backbone for the synthesis of ustiloxin B, through cyclization and modification of the tyrosine with a non-protein coding amino acid, norvaline. One of the two peptidases must be the serine peptidase ustP; and the other pepdidase is probably ustH. Macrocyclization of the core peptide derived from ustA requires the tyrosinase ustQ, as well as the homologous oxidases ustYa and ustYb, and leads to the production of the first cyclization product N-desmethylustiloxin F. For the formation of N-desmethylustiloxin F, three oxidation steps are required, hydroxylation at the benzylic position, hydroxylation at either the aromatic ring of Tyr or beta-position of Ile, and oxidative cyclization. UstQ may catalyze the oxidation of a phenol moiety, whereas the ustYa and ustYb are most likely responsible for the remaining two-step oxidations. N-desmethylustiloxin F is then methylated by ustM to yield ustiloxin F which in turn substrate of the cytochrome P450 monooxygenase ustC which catalyzes the formation of S-deoxyustiloxin H. The flavoprotein monooxygenases ustF1 and ustF2 then participate in the modification of the side chain of S-deoxyustiloxin H, leading to the synthesis of an oxime intermediate, via ustiloxin H. Finally, carboxylative dehydration performed by the cysteine desulfurase-like protein ustD yields ustiloxin B. The polypeptide is Pyridoxamine 5'-phosphate oxidase family protein ustO (Aspergillus flavus (strain ATCC 200026 / FGSC A1120 / IAM 13836 / NRRL 3357 / JCM 12722 / SRRC 167)).